We begin with the raw amino-acid sequence, 483 residues long: Aspartyl/glutamyl-tRNA(Asn/Gln) amidotransferase subunit B (483 aa).

This sequence belongs to the GatB/GatE family. GatB subfamily. Heterotrimer of A, B and C subunits.

It catalyses the reaction L-glutamyl-tRNA(Gln) + L-glutamine + ATP + H2O = L-glutaminyl-tRNA(Gln) + L-glutamate + ADP + phosphate + H(+). The enzyme catalyses L-aspartyl-tRNA(Asn) + L-glutamine + ATP + H2O = L-asparaginyl-tRNA(Asn) + L-glutamate + ADP + phosphate + 2 H(+). In terms of biological role, allows the formation of correctly charged Asn-tRNA(Asn) or Gln-tRNA(Gln) through the transamidation of misacylated Asp-tRNA(Asn) or Glu-tRNA(Gln) in organisms which lack either or both of asparaginyl-tRNA or glutaminyl-tRNA synthetases. The reaction takes place in the presence of glutamine and ATP through an activated phospho-Asp-tRNA(Asn) or phospho-Glu-tRNA(Gln). The chain is Aspartyl/glutamyl-tRNA(Asn/Gln) amidotransferase subunit B from Rickettsia canadensis (strain McKiel).